Reading from the N-terminus, the 374-residue chain is CMP-N-acetylneuraminate-beta-1,4-galactoside alpha-2,3-sialyltransferase (374 aa).

At 1–8 (MGLLVFVR) the chain is on the cytoplasmic side. Residues 9–28 (NLLLALCLFLVLGFLYYSAW) form a helical; Signal-anchor for type II membrane protein membrane-spanning segment. The Lumenal portion of the chain corresponds to 29 to 374 (KLHLLQWEDS…RVITDLSSGI (346 aa)). N79 and N170 each carry an N-linked (GlcNAc...) asparagine glycan. C159 and C313 are oxidised to a cystine.

This sequence belongs to the glycosyltransferase 29 family. In terms of processing, the soluble form derives from the membrane form by proteolytic processing. In terms of tissue distribution, found in all tissues tested. High expression found in brain, liver, kidney, colon, heart and lung.

It is found in the golgi apparatus. The protein localises to the golgi stack membrane. The protein resides in the secreted. It catalyses the reaction a beta-D-galactosyl-(1-&gt;4)-N-acetyl-beta-D-glucosaminyl derivative + CMP-N-acetyl-beta-neuraminate = an N-acetyl-alpha-neuraminyl-(2-&gt;3)-beta-D-galactosyl-(1-&gt;4)-N-acetyl-beta-D-glucosaminyl derivative + CMP + H(+). It functions in the pathway protein modification; protein glycosylation. Catalyzes the formation of the NeuAc-alpha-2,3-Gal-beta-1,4-GlcNAc-, NeuAc-alpha-2,3-Gal-beta-1,3-GlcNAc- and NeuAc-alpha-2,3-Gal-beta-1,3-GalNAc- sequences found in terminal carbohydrate groups of glycoproteins and glycolipids. The highest activity is toward Gal-beta-1,3-GlcNAc and the lowest toward Gal-beta-1,3-GalNAc. The sequence is that of CMP-N-acetylneuraminate-beta-1,4-galactoside alpha-2,3-sialyltransferase (St3gal3) from Rattus norvegicus (Rat).